A 223-amino-acid chain; its full sequence is Probable transaldolase (223 aa).

Catalysis depends on Lys-91, which acts as the Schiff-base intermediate with substrate.

It belongs to the transaldolase family. Type 3B subfamily.

It is found in the cytoplasm. The catalysed reaction is D-sedoheptulose 7-phosphate + D-glyceraldehyde 3-phosphate = D-erythrose 4-phosphate + beta-D-fructose 6-phosphate. Its pathway is carbohydrate degradation; pentose phosphate pathway; D-glyceraldehyde 3-phosphate and beta-D-fructose 6-phosphate from D-ribose 5-phosphate and D-xylulose 5-phosphate (non-oxidative stage): step 2/3. In terms of biological role, transaldolase is important for the balance of metabolites in the pentose-phosphate pathway. This chain is Probable transaldolase, found in Chlorobium phaeobacteroides (strain BS1).